The following is a 240-amino-acid chain: Pyridoxine 5'-phosphate synthase (240 aa).

N7 serves as a coordination point for 3-amino-2-oxopropyl phosphate. 9–10 provides a ligand contact to 1-deoxy-D-xylulose 5-phosphate; the sequence is DH. 3-amino-2-oxopropyl phosphate is bound at residue R18. The active-site Proton acceptor is H43. The 1-deoxy-D-xylulose 5-phosphate site is built by R45 and H50. E70 acts as the Proton acceptor in catalysis. T100 contacts 1-deoxy-D-xylulose 5-phosphate. H191 (proton donor) is an active-site residue. 3-amino-2-oxopropyl phosphate contacts are provided by residues G192 and 213-214; that span reads GH.

This sequence belongs to the PNP synthase family. As to quaternary structure, homooctamer; tetramer of dimers.

The protein resides in the cytoplasm. The catalysed reaction is 3-amino-2-oxopropyl phosphate + 1-deoxy-D-xylulose 5-phosphate = pyridoxine 5'-phosphate + phosphate + 2 H2O + H(+). It functions in the pathway cofactor biosynthesis; pyridoxine 5'-phosphate biosynthesis; pyridoxine 5'-phosphate from D-erythrose 4-phosphate: step 5/5. Functionally, catalyzes the complicated ring closure reaction between the two acyclic compounds 1-deoxy-D-xylulose-5-phosphate (DXP) and 3-amino-2-oxopropyl phosphate (1-amino-acetone-3-phosphate or AAP) to form pyridoxine 5'-phosphate (PNP) and inorganic phosphate. In Cyanothece sp. (strain PCC 7425 / ATCC 29141), this protein is Pyridoxine 5'-phosphate synthase.